The chain runs to 151 residues: Aspartate carbamoyltransferase regulatory chain (151 aa).

Cys107, Cys112, Cys135, and Cys138 together coordinate Zn(2+).

This sequence belongs to the PyrI family. In terms of assembly, contains catalytic and regulatory chains. It depends on Zn(2+) as a cofactor.

Its function is as follows. Involved in allosteric regulation of aspartate carbamoyltransferase. This is Aspartate carbamoyltransferase regulatory chain from Thermococcus onnurineus (strain NA1).